The primary structure comprises 465 residues: ATP synthase subunit beta (465 aa).

153 to 160 (GGAGVGKT) lines the ATP pocket.

This sequence belongs to the ATPase alpha/beta chains family. In terms of assembly, F-type ATPases have 2 components, CF(1) - the catalytic core - and CF(0) - the membrane proton channel. CF(1) has five subunits: alpha(3), beta(3), gamma(1), delta(1), epsilon(1). CF(0) has three main subunits: a(1), b(2) and c(9-12). The alpha and beta chains form an alternating ring which encloses part of the gamma chain. CF(1) is attached to CF(0) by a central stalk formed by the gamma and epsilon chains, while a peripheral stalk is formed by the delta and b chains.

It localises to the cell membrane. It catalyses the reaction ATP + H2O + 4 H(+)(in) = ADP + phosphate + 5 H(+)(out). Its function is as follows. Produces ATP from ADP in the presence of a proton gradient across the membrane. The catalytic sites are hosted primarily by the beta subunits. The polypeptide is ATP synthase subunit beta (Clostridium perfringens (strain ATCC 13124 / DSM 756 / JCM 1290 / NCIMB 6125 / NCTC 8237 / Type A)).